The following is a 499-amino-acid chain: Alpha-amylase A type-1/2 (499 aa).

An N-terminal signal peptide occupies residues 1–21; it reads MMVAWWSLFLYGLQVAAPALA. An intrachain disulfide couples Cys-51 to Cys-59. Substrate contacts are provided by Gln-56 and Trp-104. Asn-142 contributes to the Ca(2+) binding site. His-143 lines the substrate pocket. Cys-171 and Cys-185 are oxidised to a cystine. The Ca(2+) site is built by Glu-183 and Asp-196. Asn-218 carries N-linked (GlcNAc...) asparagine glycosylation. Position 225 (Arg-225) interacts with substrate. Asp-227, His-231, and Glu-251 together coordinate Ca(2+). The active-site Nucleophile is Asp-227. 230–231 is a binding site for substrate; it reads KH. Glu-251 serves as the catalytic Proton donor. Gly-255 lines the substrate pocket. A disulfide bridge links Cys-261 with Cys-304. Positions 318 and 365 each coordinate substrate. Cys-461 and Cys-496 form a disulfide bridge.

The protein belongs to the glycosyl hydrolase 13 family. In terms of assembly, monomer. Ca(2+) is required as a cofactor.

Its subcellular location is the secreted. It catalyses the reaction Endohydrolysis of (1-&gt;4)-alpha-D-glucosidic linkages in polysaccharides containing three or more (1-&gt;4)-alpha-linked D-glucose units.. This Aspergillus oryzae (strain ATCC 42149 / RIB 40) (Yellow koji mold) protein is Alpha-amylase A type-1/2 (amy1).